Reading from the N-terminus, the 99-residue chain is Large ribosomal subunit protein uL23 (99 aa).

The protein belongs to the universal ribosomal protein uL23 family. In terms of assembly, part of the 50S ribosomal subunit. Contacts protein L29, and trigger factor when it is bound to the ribosome.

In terms of biological role, one of the early assembly proteins it binds 23S rRNA. One of the proteins that surrounds the polypeptide exit tunnel on the outside of the ribosome. Forms the main docking site for trigger factor binding to the ribosome. The chain is Large ribosomal subunit protein uL23 from Hyphomonas neptunium (strain ATCC 15444).